Here is a 104-residue protein sequence, read N- to C-terminus: Large ribosomal subunit protein uL24 (104 aa).

The protein belongs to the universal ribosomal protein uL24 family. In terms of assembly, part of the 50S ribosomal subunit.

Functionally, one of two assembly initiator proteins, it binds directly to the 5'-end of the 23S rRNA, where it nucleates assembly of the 50S subunit. One of the proteins that surrounds the polypeptide exit tunnel on the outside of the subunit. This chain is Large ribosomal subunit protein uL24, found in Yersinia enterocolitica serotype O:8 / biotype 1B (strain NCTC 13174 / 8081).